We begin with the raw amino-acid sequence, 314 residues long: 4-hydroxy-3-methylbut-2-enyl diphosphate reductase (314 aa).

Position 12 (Cys-12) interacts with [4Fe-4S] cluster. (2E)-4-hydroxy-3-methylbut-2-enyl diphosphate is bound by residues His-43 and His-81. 2 residues coordinate dimethylallyl diphosphate: His-43 and His-81. Residues His-43 and His-81 each coordinate isopentenyl diphosphate. [4Fe-4S] cluster is bound at residue Cys-103. His-131 is a (2E)-4-hydroxy-3-methylbut-2-enyl diphosphate binding site. His-131 contacts dimethylallyl diphosphate. His-131 contacts isopentenyl diphosphate. The Proton donor role is filled by Glu-133. Thr-170 contacts (2E)-4-hydroxy-3-methylbut-2-enyl diphosphate. Position 198 (Cys-198) interacts with [4Fe-4S] cluster. The (2E)-4-hydroxy-3-methylbut-2-enyl diphosphate site is built by Ser-226, Asn-228, and Ser-271. The dimethylallyl diphosphate site is built by Ser-226, Asn-228, and Ser-271. Ser-226, Asn-228, and Ser-271 together coordinate isopentenyl diphosphate.

This sequence belongs to the IspH family. [4Fe-4S] cluster is required as a cofactor.

The catalysed reaction is isopentenyl diphosphate + 2 oxidized [2Fe-2S]-[ferredoxin] + H2O = (2E)-4-hydroxy-3-methylbut-2-enyl diphosphate + 2 reduced [2Fe-2S]-[ferredoxin] + 2 H(+). It carries out the reaction dimethylallyl diphosphate + 2 oxidized [2Fe-2S]-[ferredoxin] + H2O = (2E)-4-hydroxy-3-methylbut-2-enyl diphosphate + 2 reduced [2Fe-2S]-[ferredoxin] + 2 H(+). Its pathway is isoprenoid biosynthesis; dimethylallyl diphosphate biosynthesis; dimethylallyl diphosphate from (2E)-4-hydroxy-3-methylbutenyl diphosphate: step 1/1. The protein operates within isoprenoid biosynthesis; isopentenyl diphosphate biosynthesis via DXP pathway; isopentenyl diphosphate from 1-deoxy-D-xylulose 5-phosphate: step 6/6. Catalyzes the conversion of 1-hydroxy-2-methyl-2-(E)-butenyl 4-diphosphate (HMBPP) into a mixture of isopentenyl diphosphate (IPP) and dimethylallyl diphosphate (DMAPP). Acts in the terminal step of the DOXP/MEP pathway for isoprenoid precursor biosynthesis. This is 4-hydroxy-3-methylbut-2-enyl diphosphate reductase from Bacillus pumilus (strain SAFR-032).